A 254-amino-acid chain; its full sequence is Major prion protein (254 aa).

Residues 1 to 28 (MANLGYWLLALFVTTCTDVGLCKKRPKP) form the signal peptide. The interval 23–38 (KKRPKPGGWNTGGSRY) is interaction with ADGRG6. The segment at 23–231 (KKRPKPGGWN…SQAYYDGRRS (209 aa)) is interaction with GRB2, ERI3 and SYN1. Residues 24–107 (KRPKPGGWNT…QWNKPSKPKT (84 aa)) are disordered. 5 repeat units span residues 51–59 (PQSGGTWGQ), 60–67 (PHGGGWGQ), 68–75 (PHGGGWGQ), 76–83 (PHGGGWGQ), and 84–91 (PHGGGWSQ). The interval 51–91 (PQSGGTWGQPHGGGWGQPHGGGWGQPHGGGWGQPHGGGWSQ) is 5 X 8 AA tandem repeats of P-H-G-G-G-W-G-Q. The segment covering 55-95 (GTWGQPHGGGWGQPHGGGWGQPHGGGWGQPHGGGWSQGGGT) has biased composition (gly residues). His61, Gly62, Gly63, His69, Gly70, Gly71, His77, Gly78, Gly79, His85, Gly86, and Gly87 together coordinate Cu(2+). The cysteines at positions 179 and 214 are disulfide-linked. N-linked (GlcNAc...) asparagine glycans are attached at residues Asn181 and Asn197. A lipid anchor (GPI-anchor amidated serine) is attached at Ser231. The propeptide at 232–254 (SAVLFSSPPVILLISFLIFLIVG) is removed in mature form.

This sequence belongs to the prion family. As to quaternary structure, monomer and homodimer. Has a tendency to aggregate into amyloid fibrils containing a cross-beta spine, formed by a steric zipper of superposed beta-strands. Soluble oligomers may represent an intermediate stage on the path to fibril formation. Copper binding may promote oligomerization. Interacts with GRB2, APP, ERI3/PRNPIP and SYN1. Mislocalized cytosolically exposed PrP interacts with MGRN1; this interaction alters MGRN1 subcellular location and causes lysosomal enlargement. Interacts with APP. Interacts with KIAA1191. Interacts with ADGRG6.

Its subcellular location is the cell membrane. The protein localises to the golgi apparatus. Its primary physiological function is unclear. May play a role in neuronal development and synaptic plasticity. May be required for neuronal myelin sheath maintenance. May promote myelin homeostasis through acting as an agonist for ADGRG6 receptor. May play a role in iron uptake and iron homeostasis. Soluble oligomers are toxic to cultured neuroblastoma cells and induce apoptosis (in vitro). Association with GPC1 (via its heparan sulfate chains) targets PRNP to lipid rafts. Also provides Cu(2+) or Zn(2+) for the ascorbate-mediated GPC1 deaminase degradation of its heparan sulfate side chains. The polypeptide is Major prion protein (Prnp) (Rattus norvegicus (Rat)).